The primary structure comprises 762 residues: Hyperosmolality-gated Ca2+ permeable channel 2.2 (762 aa).

10 helical membrane-spanning segments follow: residues 3–23 (VSAL…LVSL), 90–110 (MVIC…AFVL), 144–164 (LWVH…LLYF), 354–374 (IATL…VTFV), 402–422 (VITG…VPPL), 445–465 (KILY…GSVI), 500–520 (GWAG…NLIA), 557–577 (VIAP…YLIY), 594–614 (QYWP…QVIA), and 615–635 (LGFF…PLIL).

This sequence belongs to the CSC1 (TC 1.A.17) family.

Its subcellular location is the membrane. Its function is as follows. Acts as an osmosensitive calcium-permeable cation channel. This chain is Hyperosmolality-gated Ca2+ permeable channel 2.2, found in Arabidopsis thaliana (Mouse-ear cress).